The following is a 190-amino-acid chain: A-type ATP synthase subunit E (190 aa).

This sequence belongs to the V-ATPase E subunit family. In terms of assembly, has multiple subunits with at least A(3), B(3), C, D, E, F, H, I and proteolipid K(x).

It is found in the cell membrane. Component of the A-type ATP synthase that produces ATP from ADP in the presence of a proton gradient across the membrane. This is A-type ATP synthase subunit E from Pyrobaculum islandicum (strain DSM 4184 / JCM 9189 / GEO3).